Here is a 112-residue protein sequence, read N- to C-terminus: Mitochondrial import inner membrane translocase subunit TIM14-2 (112 aa).

A helical membrane pass occupies residues 7 to 25 (AGAAVAAAAYAGKYGIEAW). The region spanning 53–112 (EAALILGVRESVAAEKVKEAHRRVMVANHPDAGGSHYLASKINEAKDMMLGKTKNSGSAF) is the J domain.

It belongs to the TIM14 family. Probable component of the PAM complex at least composed of a mitochondrial HSP70 protein, TIMM44 and TIMM14. The complex interacts with the TIMM23 component of the TIM17:23 complex.

Its subcellular location is the mitochondrion. The protein localises to the mitochondrion inner membrane. Functionally, component of the PAM complex, a complex required for the translocation of transit peptide-containing proteins from the inner membrane into the mitochondrial matrix in an ATP-dependent manner. The sequence is that of Mitochondrial import inner membrane translocase subunit TIM14-2 (TIM14-2) from Arabidopsis thaliana (Mouse-ear cress).